A 145-amino-acid chain; its full sequence is D-aminoacyl-tRNA deacylase (145 aa).

The Gly-cisPro motif, important for rejection of L-amino acids motif lies at 137–138 (GP).

Belongs to the DTD family. Homodimer.

The protein localises to the cytoplasm. The enzyme catalyses glycyl-tRNA(Ala) + H2O = tRNA(Ala) + glycine + H(+). It catalyses the reaction a D-aminoacyl-tRNA + H2O = a tRNA + a D-alpha-amino acid + H(+). Its function is as follows. An aminoacyl-tRNA editing enzyme that deacylates mischarged D-aminoacyl-tRNAs. Also deacylates mischarged glycyl-tRNA(Ala), protecting cells against glycine mischarging by AlaRS. Acts via tRNA-based rather than protein-based catalysis; rejects L-amino acids rather than detecting D-amino acids in the active site. By recycling D-aminoacyl-tRNA to D-amino acids and free tRNA molecules, this enzyme counteracts the toxicity associated with the formation of D-aminoacyl-tRNA entities in vivo and helps enforce protein L-homochirality. This is D-aminoacyl-tRNA deacylase from Aeromonas hydrophila subsp. hydrophila (strain ATCC 7966 / DSM 30187 / BCRC 13018 / CCUG 14551 / JCM 1027 / KCTC 2358 / NCIMB 9240 / NCTC 8049).